Here is a 63-residue protein sequence, read N- to C-terminus: uncharacterized protein (63 aa).

The span at 1 to 15 shows a compositional bias: basic residues; that stretch reads MGRNHIHKNRDKNKQ. The interval 1–63 is disordered; it reads MGRNHIHKNR…ADNRAKKKSR (63 aa). Acidic residues predominate over residues 30-44; that stretch reads GVYEEYSTELADADD. Positions 45–57 are enriched in basic and acidic residues; the sequence is REAQERAKAADNR.

This is an uncharacterized protein from Bacillus subtilis (strain 168).